Reading from the N-terminus, the 98-residue chain is uncharacterized protein (98 aa).

Positions 1–23 (MKYVALAFVLSLVILQISAQVGA) are cleaved as a signal peptide.

In terms of tissue distribution, nacreous layer of shell (at protein level). Expressed primarily in the mantle with highest level in the mantle pallium and lower level in the mantle edge.

It is found in the secreted. This is an uncharacterized protein from Pinctada maxima (Silver-lipped pearl oyster).